A 475-amino-acid chain; its full sequence is Vasculin-like protein 1 (475 aa).

Serine 49 and serine 76 each carry phosphoserine. Disordered regions lie at residues 92–115 (NLSG…GSTG) and 160–191 (PSLN…SAKQ). At serine 202 the chain carries Phosphoserine. Disordered regions lie at residues 237-271 (LVPK…EAAL) and 292-318 (PKES…RRTT). Positions 294-311 (ESPSSTTPPIEISSSRLT) are enriched in low complexity. Threonine 300 carries the post-translational modification Phosphothreonine. Serine 383 carries the phosphoserine modification. A disordered region spans residues 456–475 (CEDSDTETSSSETSDDDAWK).

The protein belongs to the vasculin family.

Its subcellular location is the nucleus. In terms of biological role, possible transcription factor. The chain is Vasculin-like protein 1 (Gpbp1l1) from Rattus norvegicus (Rat).